A 440-amino-acid chain; its full sequence is Light-independent protochlorophyllide reductase subunit N (440 aa).

The tract at residues 1 to 24 is disordered; the sequence is MTCRPALSDSHPPEPGTPSSPSFG. The [4Fe-4S] cluster site is built by C42, C67, and C128.

It belongs to the BchN/ChlN family. As to quaternary structure, protochlorophyllide reductase is composed of three subunits; BchL, BchN and BchB. Forms a heterotetramer of two BchB and two BchN subunits. It depends on [4Fe-4S] cluster as a cofactor.

The enzyme catalyses chlorophyllide a + oxidized 2[4Fe-4S]-[ferredoxin] + 2 ADP + 2 phosphate = protochlorophyllide a + reduced 2[4Fe-4S]-[ferredoxin] + 2 ATP + 2 H2O. Its pathway is porphyrin-containing compound metabolism; bacteriochlorophyll biosynthesis (light-independent). Component of the dark-operative protochlorophyllide reductase (DPOR) that uses Mg-ATP and reduced ferredoxin to reduce ring D of protochlorophyllide (Pchlide) to form chlorophyllide a (Chlide). This reaction is light-independent. The NB-protein (BchN-BchB) is the catalytic component of the complex. The polypeptide is Light-independent protochlorophyllide reductase subunit N (Rhodospirillum rubrum (strain ATCC 11170 / ATH 1.1.1 / DSM 467 / LMG 4362 / NCIMB 8255 / S1)).